The sequence spans 371 residues: Aspartate-semialdehyde dehydrogenase (371 aa).

Residues 11 to 14, 38 to 39, and glutamine 75 each bind NADP(+); these read RGMV and TS. Position 104 (arginine 104) interacts with phosphate. Cysteine 137 serves as the catalytic Acyl-thioester intermediate. A substrate-binding site is contributed by glutamine 164. NADP(+) is bound at residue 167–168; it reads SG. Substrate is bound at residue glutamate 243. Phosphate is bound at residue lysine 246. A substrate-binding site is contributed by arginine 269. The Proton acceptor role is filled by histidine 276. Glutamine 352 contributes to the NADP(+) binding site.

Belongs to the aspartate-semialdehyde dehydrogenase family. As to quaternary structure, homodimer.

It carries out the reaction L-aspartate 4-semialdehyde + phosphate + NADP(+) = 4-phospho-L-aspartate + NADPH + H(+). The protein operates within amino-acid biosynthesis; L-lysine biosynthesis via DAP pathway; (S)-tetrahydrodipicolinate from L-aspartate: step 2/4. Its pathway is amino-acid biosynthesis; L-methionine biosynthesis via de novo pathway; L-homoserine from L-aspartate: step 2/3. It participates in amino-acid biosynthesis; L-threonine biosynthesis; L-threonine from L-aspartate: step 2/5. Functionally, catalyzes the NADPH-dependent formation of L-aspartate-semialdehyde (L-ASA) by the reductive dephosphorylation of L-aspartyl-4-phosphate. This Buchnera aphidicola subsp. Schizaphis graminum (strain Sg) protein is Aspartate-semialdehyde dehydrogenase.